A 212-amino-acid chain; its full sequence is Thymidylate kinase (212 aa).

ATP is bound by residues Arg-16 to Thr-21, Arg-97, Arg-182, and Lys-192.

The protein belongs to the thymidylate kinase family. Mg(2+) serves as cofactor.

It catalyses the reaction dTMP + ATP = dTDP + ADP. It participates in pyrimidine metabolism; dTTP biosynthesis. Its function is as follows. Catalyzes the phosphorylation of thymidine monophosphate (dTMP) to thymidine diphosphate (dTDP), the immediate precursor for the DNA building block dTTP, with ATP as the preferred phosphoryl donor in the presence of Mg(2+). The protein is Thymidylate kinase (dtymk) of Danio rerio (Zebrafish).